The sequence spans 473 residues: Purple acid phosphatase 1 (473 aa).

The signal sequence occupies residues 1–38; the sequence is MRLVVVGLWCLILGLILNPTKFCDAGVTSSYVRKSLSA. Residue Asn-118 is glycosylated (N-linked (GlcNAc...) asparagine). Residue Asp-172 participates in Fe cation binding. N-linked (GlcNAc...) asparagine glycosylation is present at Asn-180. Residues Asp-201 and Tyr-204 each contribute to the Fe cation site. Position 201 (Asp-201) interacts with Mn(2+). Asn-238 provides a ligand contact to Mn(2+). Residue Asn-238 coordinates substrate. Asn-311 carries N-linked (GlcNAc...) asparagine glycosylation. His-323 provides a ligand contact to Mn(2+). His-333 (proton donor) is an active-site residue. A Mn(2+)-binding site is contributed by His-360. 360–362 is a binding site for substrate; that stretch reads HVH. His-362 is a binding site for Fe cation. A glycan (N-linked (GlcNAc...) asparagine) is linked at Asn-433.

The protein belongs to the metallophosphoesterase superfamily. Purple acid phosphatase family. Homodimer; disulfide-linked. The cofactor is Fe cation. Mn(2+) serves as cofactor. Requires Zn(2+) as cofactor. It depends on Cu(2+) as a cofactor. Mg(2+) is required as a cofactor.

Its subcellular location is the secreted. It catalyses the reaction a phosphate monoester + H2O = an alcohol + phosphate. This is Purple acid phosphatase 1 (PAP1) from Ipomoea batatas (Sweet potato).